The chain runs to 161 residues: Phosphopantetheine adenylyltransferase (161 aa).

Residue Thr-11 participates in substrate binding. ATP-binding positions include 11-12 and His-19; that span reads TF. Substrate is bound by residues Lys-43, Thr-75, and Arg-89. ATP-binding positions include 90-92, Glu-100, and 125-131; these read GLR and YSFLSSS.

Belongs to the bacterial CoaD family. In terms of assembly, homohexamer. Mg(2+) is required as a cofactor.

Its subcellular location is the cytoplasm. The enzyme catalyses (R)-4'-phosphopantetheine + ATP + H(+) = 3'-dephospho-CoA + diphosphate. Its pathway is cofactor biosynthesis; coenzyme A biosynthesis; CoA from (R)-pantothenate: step 4/5. Functionally, reversibly transfers an adenylyl group from ATP to 4'-phosphopantetheine, yielding dephospho-CoA (dPCoA) and pyrophosphate. In Listeria innocua serovar 6a (strain ATCC BAA-680 / CLIP 11262), this protein is Phosphopantetheine adenylyltransferase.